Consider the following 440-residue polypeptide: Guanine/hypoxanthine permease PbuG (440 aa).

Helical transmembrane passes span 18 to 38, 57 to 77, 81 to 101, 107 to 127, 142 to 162, 175 to 195, 201 to 221, 251 to 271, 291 to 311, 327 to 347, 354 to 374, 388 to 408, and 419 to 439; these read IIGG…NPIT, AVFT…GLIA, IAIA…VLGM, AALS…LTGF, AVGA…SGII, IHSG…ILMV, GVFI…LVPV, MLIV…GTLV, ALLA…STTT, GFAA…SPLL, VTAP…GKIA, MIMM…FIFY, and KEVH…FIFL.

This sequence belongs to the nucleobase:cation symporter-2 (NCS2) (TC 2.A.40) family. Azg-like subfamily.

It is found in the cell membrane. Involved in the uptake of the purine bases hypoxanthine and guanine. This Bacillus subtilis (strain 168) protein is Guanine/hypoxanthine permease PbuG (pbuG).